The primary structure comprises 255 residues: 4-hydroxy-tetrahydrodipicolinate reductase (255 aa).

Residues 8–13 (GATGRV), 88–90 (GTT), and 112–115 (ATNM) each bind NAD(+). Catalysis depends on H144, which acts as the Proton donor/acceptor. H145 is a (S)-2,3,4,5-tetrahydrodipicolinate binding site. Residue K148 is the Proton donor of the active site. 154–155 (GT) provides a ligand contact to (S)-2,3,4,5-tetrahydrodipicolinate.

It belongs to the DapB family.

It is found in the cytoplasm. The catalysed reaction is (S)-2,3,4,5-tetrahydrodipicolinate + NAD(+) + H2O = (2S,4S)-4-hydroxy-2,3,4,5-tetrahydrodipicolinate + NADH + H(+). It carries out the reaction (S)-2,3,4,5-tetrahydrodipicolinate + NADP(+) + H2O = (2S,4S)-4-hydroxy-2,3,4,5-tetrahydrodipicolinate + NADPH + H(+). Its pathway is amino-acid biosynthesis; L-lysine biosynthesis via DAP pathway; (S)-tetrahydrodipicolinate from L-aspartate: step 4/4. Its function is as follows. Catalyzes the conversion of 4-hydroxy-tetrahydrodipicolinate (HTPA) to tetrahydrodipicolinate. This chain is 4-hydroxy-tetrahydrodipicolinate reductase, found in Helicobacter hepaticus (strain ATCC 51449 / 3B1).